A 63-amino-acid polypeptide reads, in one-letter code: Large ribosomal subunit protein uL30 (63 aa).

Belongs to the universal ribosomal protein uL30 family. Part of the 50S ribosomal subunit.

In Rickettsia prowazekii (strain Madrid E), this protein is Large ribosomal subunit protein uL30.